Here is a 927-residue protein sequence, read N- to C-terminus: Protein translocase subunit SecA (927 aa).

ATP contacts are provided by residues Gln-86, 104 to 108 (GEGKT), and Asp-494. A disordered region spans residues 853-927 (YTAPDEDGTP…GSKAKRGKRR (75 aa)). Residues 860–879 (GTPHAEVEAVDPGARERTSE) show a composition bias toward basic and acidic residues. A compositionally biased stretch (basic residues) spans 907 to 927 (RAKRRGASARSGSKAKRGKRR).

Belongs to the SecA family. Monomer and homodimer. Part of the essential Sec protein translocation apparatus which comprises SecA, SecYEG and auxiliary proteins SecDF. Other proteins may also be involved.

It is found in the cell membrane. Its subcellular location is the cytoplasm. The enzyme catalyses ATP + H2O + cellular proteinSide 1 = ADP + phosphate + cellular proteinSide 2.. Its function is as follows. Part of the Sec protein translocase complex. Interacts with the SecYEG preprotein conducting channel. Has a central role in coupling the hydrolysis of ATP to the transfer of proteins into and across the cell membrane, serving as an ATP-driven molecular motor driving the stepwise translocation of polypeptide chains across the membrane. This chain is Protein translocase subunit SecA, found in Kocuria rhizophila (strain ATCC 9341 / DSM 348 / NBRC 103217 / DC2201).